Here is a 597-residue protein sequence, read N- to C-terminus: Elongation factor 4 (597 aa).

One can recognise a tr-type G domain in the interval 2–184 (KNIRNFSIIA…EIVAKIPAPA (183 aa)). Residues 14–19 (DHGKST) and 131–134 (NKID) contribute to the GTP site.

The protein belongs to the TRAFAC class translation factor GTPase superfamily. Classic translation factor GTPase family. LepA subfamily.

It localises to the cell inner membrane. The enzyme catalyses GTP + H2O = GDP + phosphate + H(+). In terms of biological role, required for accurate and efficient protein synthesis under certain stress conditions. May act as a fidelity factor of the translation reaction, by catalyzing a one-codon backward translocation of tRNAs on improperly translocated ribosomes. Back-translocation proceeds from a post-translocation (POST) complex to a pre-translocation (PRE) complex, thus giving elongation factor G a second chance to translocate the tRNAs correctly. Binds to ribosomes in a GTP-dependent manner. This chain is Elongation factor 4, found in Neisseria meningitidis serogroup A / serotype 4A (strain DSM 15465 / Z2491).